A 215-amino-acid chain; its full sequence is uncharacterized protein (215 aa).

Catalysis depends on charge relay system residues Ser-114, Asp-162, and His-194.

It belongs to the AB hydrolase superfamily. AB hydrolase 2 family.

This is an uncharacterized protein from Rickettsia prowazekii (strain Madrid E).